Here is a 249-residue protein sequence, read N- to C-terminus: 4-hydroxy-tetrahydrodipicolinate reductase (249 aa).

Residues Gly8–Met13, Gly87–Thr89, and Ala111–Phe114 contribute to the NAD(+) site. The active-site Proton donor/acceptor is His143. A (S)-2,3,4,5-tetrahydrodipicolinate-binding site is contributed by His144. Lys147 acts as the Proton donor in catalysis. (S)-2,3,4,5-tetrahydrodipicolinate is bound at residue Gly153 to Thr154.

It belongs to the DapB family.

Its subcellular location is the cytoplasm. It carries out the reaction (S)-2,3,4,5-tetrahydrodipicolinate + NAD(+) + H2O = (2S,4S)-4-hydroxy-2,3,4,5-tetrahydrodipicolinate + NADH + H(+). The enzyme catalyses (S)-2,3,4,5-tetrahydrodipicolinate + NADP(+) + H2O = (2S,4S)-4-hydroxy-2,3,4,5-tetrahydrodipicolinate + NADPH + H(+). The protein operates within amino-acid biosynthesis; L-lysine biosynthesis via DAP pathway; (S)-tetrahydrodipicolinate from L-aspartate: step 4/4. Its function is as follows. Catalyzes the conversion of 4-hydroxy-tetrahydrodipicolinate (HTPA) to tetrahydrodipicolinate. The polypeptide is 4-hydroxy-tetrahydrodipicolinate reductase (Haloarcula marismortui (strain ATCC 43049 / DSM 3752 / JCM 8966 / VKM B-1809) (Halobacterium marismortui)).